A 265-amino-acid chain; its full sequence is Small ribosomal subunit protein uS3 (265 aa).

The 69-residue stretch at 43–111 folds into the KH type-2 domain; the sequence is IRTMLKTSLD…QIQLNILEVK (69 aa). A disordered region spans residues 217-265; that stretch reads AREQANQKSSRPERRNDRSDGRTGDRRTNAPRTAPAAEAAPVAAAGVEA. The segment covering 226–244 has biased composition (basic and acidic residues); sequence SRPERRNDRSDGRTGDRRT. A compositionally biased stretch (low complexity) spans 250–265; the sequence is APAAEAAPVAAAGVEA.

The protein belongs to the universal ribosomal protein uS3 family. As to quaternary structure, part of the 30S ribosomal subunit. Forms a tight complex with proteins S10 and S14.

Functionally, binds the lower part of the 30S subunit head. Binds mRNA in the 70S ribosome, positioning it for translation. This chain is Small ribosomal subunit protein uS3, found in Clavibacter michiganensis subsp. michiganensis (strain NCPPB 382).